Reading from the N-terminus, the 207-residue chain is Transcription factor bHLH149 (207 aa).

Positions 1 to 25 (MVESLFPSIENTGESSRRKKPRISE) are disordered. One can recognise a bHLH domain in the interval 132 to 181 (KSRKGLTETNRIKLPAVERKLKILGRLVPGCRKVSVPNLLDEATDYIAAL).

Homodimer. Interacts with PRE3.

Its subcellular location is the nucleus. In terms of biological role, atypical bHLH transcription factor probably unable to bind DNA. Negatively regulates brassinosteroid signaling. The polypeptide is Transcription factor bHLH149 (BHLH149) (Arabidopsis thaliana (Mouse-ear cress)).